A 543-amino-acid chain; its full sequence is Chaperonin GroEL (543 aa).

Residues 29–32, Lys50, 86–90, Gly415, and Asp495 contribute to the ATP site; these read TLGP and DGTTT.

It belongs to the chaperonin (HSP60) family. In terms of assembly, forms a cylinder of 14 subunits composed of two heptameric rings stacked back-to-back. Interacts with the co-chaperonin GroES.

It is found in the cytoplasm. It carries out the reaction ATP + H2O + a folded polypeptide = ADP + phosphate + an unfolded polypeptide.. Its function is as follows. Together with its co-chaperonin GroES, plays an essential role in assisting protein folding. The GroEL-GroES system forms a nano-cage that allows encapsulation of the non-native substrate proteins and provides a physical environment optimized to promote and accelerate protein folding. The sequence is that of Chaperonin GroEL from Flavobacterium johnsoniae (strain ATCC 17061 / DSM 2064 / JCM 8514 / BCRC 14874 / CCUG 350202 / NBRC 14942 / NCIMB 11054 / UW101) (Cytophaga johnsonae).